Consider the following 252-residue polypeptide: MEGPASPARAPGALPYYVAFSQLLGLIVVAMTGAWLGMYRGGIAWESALQFNVHPLCMIIGLVFLQGDALLVYRVFRNEAKRTTKVLHGLLHVFAFVIALVGLVAVFEHHRKKGYADLYSLHSWCGILVFALFFAQWLVGFSFFLFPGASFSLRSRYRPQHVFFGAAIFLLSVATALLGLKEALLFELGTKYSMFEPEGVLANVLGLLLATFATVILYILTRADWKRPLQAEEQALSMDFKTLTEGDSPSSQ.

Position 1 is an N-acetylmethionine (M1). Residues 1-17 are Cytoplasmic-facing; sequence MEGPASPARAPGALPYY. The chain crosses the membrane as a helical span at residues 18 to 38; that stretch reads VAFSQLLGLIVVAMTGAWLGM. A Cytochrome b561 domain is found at 20-221; the sequence is FSQLLGLIVV…FATVILYILT (202 aa). The Vesicular segment spans residues 39–52; the sequence is YRGGIAWESALQFN. Residues 53–73 form a helical membrane-spanning segment; that stretch reads VHPLCMIIGLVFLQGDALLVY. Heme b contacts are provided by H54, R74, and K81. The Cytoplasmic portion of the chain corresponds to 74–86; the sequence is RVFRNEAKRTTKV. L-ascorbate-binding residues include K81 and K85. The chain crosses the membrane as a helical span at residues 87–107; it reads LHGLLHVFAFVIALVGLVAVF. Heme b-binding positions include H88, 117 to 120, and H122; that span reads DLYS. At 108 to 125 the chain is on the vesicular side; it reads EHHRKKGYADLYSLHSWC. A helical membrane pass occupies residues 126-146; sequence GILVFALFFAQWLVGFSFFLF. Residues 147–159 are Cytoplasmic-facing; it reads PGASFSLRSRYRP. R154 contributes to the L-ascorbate binding site. Residues 160–180 traverse the membrane as a helical segment; sequence QHVFFGAAIFLLSVATALLGL. H161 and E182 together coordinate heme b. Topologically, residues 181 to 199 are vesicular; sequence KEALLFELGTKYSMFEPEG. A helical membrane pass occupies residues 200–220; the sequence is VLANVLGLLLATFATVILYIL. Residues 221-252 are Cytoplasmic-facing; the sequence is TRADWKRPLQAEEQALSMDFKTLTEGDSPSSQ. Position 226 (K226) interacts with heme b. 2 positions are modified to phosphoserine: S248 and S250.

Heme b serves as cofactor. As to expression, expressed in the adrenal medulla and all brain regions, but not in visceral organs.

It is found in the cytoplasmic vesicle. The protein localises to the secretory vesicle. Its subcellular location is the chromaffin granule membrane. The catalysed reaction is monodehydro-L-ascorbate radical(out) + L-ascorbate(in) = monodehydro-L-ascorbate radical(in) + L-ascorbate(out). Transmembrane reductase that uses ascorbate as an electron donor in the cytoplasm and transfers electrons across membranes to reduce monodehydro-L-ascorbate radical in the lumen of secretory vesicles. It is therefore involved the regeneration and homeostasis within secretory vesicles of ascorbate which in turn provides reducing equivalents needed to support the activity of intravesicular enzymes. The sequence is that of Transmembrane ascorbate-dependent reductase CYB561 (CYB561) from Bos taurus (Bovine).